The sequence spans 219 residues: MTQQEMKKIAAQAALQFVKPDTIVGVGSGSTVNCFIDALASMKDQIKGAVAASKASEGRLRAIGIEVFNANEVSELDVYIDGADEITPQGAMIKGGGAALTREKIVSSLAKKFVCIVDGSKQVDVLGTTFPLPVEVIPMARSYVARQLVALGGSPEYREGVVTDNGNVILDVHNFHIIEPLKMEHTINNIAGVVTNGIFAQRYANVTIVGTPEGAKIIE.

Substrate is bound by residues 28–31 (SGST), 81–84 (DGAD), and 94–97 (KGGG). Glu-103 acts as the Proton acceptor in catalysis. Lys-121 contacts substrate.

Belongs to the ribose 5-phosphate isomerase family. In terms of assembly, homodimer.

The catalysed reaction is aldehydo-D-ribose 5-phosphate = D-ribulose 5-phosphate. The protein operates within carbohydrate degradation; pentose phosphate pathway; D-ribose 5-phosphate from D-ribulose 5-phosphate (non-oxidative stage): step 1/1. Functionally, catalyzes the reversible conversion of ribose-5-phosphate to ribulose 5-phosphate. The chain is Ribose-5-phosphate isomerase A from Actinobacillus pleuropneumoniae serotype 3 (strain JL03).